Here is a 553-residue protein sequence, read N- to C-terminus: Heterochromatin protein 1-binding protein 3 (553 aa).

Position 2 is an N-acetylalanine (Ala-2). At Ser-6 the chain carries Phosphoserine. Disordered stretches follow at residues 29–134 (KLGE…KTIP) and 140–159 (SASQ…SPRP). Phosphothreonine is present on Thr-51. The span at 60-71 (GEEEKPEPDISS) shows a compositional bias: acidic residues. Lys-64 is covalently cross-linked (Glycyl lysine isopeptide (Lys-Gly) (interchain with G-Cter in SUMO2)). At Thr-85 the chain carries Phosphothreonine. The segment covering 94 to 127 (EQPKGEPENEEKEENKSSEETKKDEKDQSKEKEK) has biased composition (basic and acidic residues). A Glycyl lysine isopeptide (Lys-Gly) (interchain with G-Cter in SUMO2) cross-link involves residue Lys-97. Polar residues predominate over residues 140 to 154 (SASQLARAQKQTPMA). Phosphoserine occurs at positions 142, 155, and 156. The H15 1 domain maps to 157–232 (PRPKMDAILT…GASGSFVVVQ (76 aa)). The residue at position 190 (Lys-190) is an N6-acetyllysine. The disordered stretch occupies residues 230-255 (VVQKSRKTPQKSRNRKNRSSAVDPEP). The span at 233–247 (KSRKTPQKSRNRKNR) shows a compositional bias: basic residues. Residues Ser-248 and Ser-249 each carry the phosphoserine modification. A PxVxL motif motif is present at residues 255–259 (PQVKL). 2 consecutive H15 domains span residues 255–330 (PQVK…QLKK) and 337–413 (LGGS…QLCF). A Glycyl lysine isopeptide (Lys-Gly) (interchain with G-Cter in SUMO2) cross-link involves residue Lys-258. The segment at 422 to 553 (LFPKKEPDDS…TMKKSFRVKK (132 aa)) is disordered. A compositionally biased stretch (acidic residues) spans 430–450 (DSRDEDEDEDESSEEDSEDEE). A phosphoserine mark is found at Ser-441, Ser-442, and Ser-446. Over residues 489–510 (GKARPLPKKAPPKAKTPAKKTR) the composition is skewed to basic residues. Low complexity predominate over residues 517–527 (KKPSGGSSKKP). Residues 543–553 (STMKKSFRVKK) show a composition bias toward basic residues.

In terms of assembly, interacts (via PxVxL motif) with CBX5 (via Trp-174).

It localises to the nucleus. The protein resides in the chromosome. In terms of biological role, component of heterochromatin that maintains heterochromatin integrity during G1/S progression and regulates the duration of G1 phase to critically influence cell proliferative capacity. Mediates chromatin condensation during hypoxia, leading to increased tumor cell viability, radio-resistance, chemo-resistance and self-renewal. This Homo sapiens (Human) protein is Heterochromatin protein 1-binding protein 3 (HP1BP3).